Reading from the N-terminus, the 204-residue chain is Casparian strip membrane protein 3 (204 aa).

Residues 1–41 lie on the Cytoplasmic side of the membrane; sequence MKNESTFIDVPADSSSAMKGKAPLIGVAKDHTASGSGGYNR. The helical transmembrane segment at 42-62 threads the bilayer; the sequence is GLSIFDFLLRLAAIVAASVAA. Residues 63–92 are Extracellular-facing; the sequence is GTMFTSDETLPFFTQFLQFQAGYDDLPTFQ. A helical transmembrane segment spans residues 93-113; it reads FFVISMSLVSGYIVLSLPISV. Topologically, residues 114 to 125 are cytoplasmic; that stretch reads VTIVRPLAAAPR. The helical transmembrane segment at 126-146 threads the bilayer; it reads LLLLVLDTAVMGLTMAAASSA. Over 147–204 the chain is Extracellular; the sequence is AAISYVAHNGNQNTNWLPICQQFGDFCQKTSGGCGLFLCRRRVFHDPGCPLRSRSQRH.

Belongs to the Casparian strip membrane proteins (CASP) family. Homodimer and heterodimers.

Its subcellular location is the cell membrane. In terms of biological role, regulates membrane-cell wall junctions and localized cell wall deposition. Required for establishment of the Casparian strip membrane domain (CSD) and the subsequent formation of Casparian strips, a cell wall modification of the root endodermis that determines an apoplastic barrier between the intraorganismal apoplasm and the extraorganismal apoplasm and prevents lateral diffusion. In Raphanus sativus (Radish), this protein is Casparian strip membrane protein 3.